Reading from the N-terminus, the 194-residue chain is Threonylcarbamoyl-AMP synthase (194 aa).

In terms of domain architecture, YrdC-like spans 12 to 194; that stretch reads SPNMKDLLIQ…DVMTGKLIRE (183 aa).

The protein belongs to the SUA5 family. TsaC subfamily.

The protein resides in the cytoplasm. It catalyses the reaction L-threonine + hydrogencarbonate + ATP = L-threonylcarbamoyladenylate + diphosphate + H2O. Its function is as follows. Required for the formation of a threonylcarbamoyl group on adenosine at position 37 (t(6)A37) in tRNAs that read codons beginning with adenine. Catalyzes the conversion of L-threonine, HCO(3)(-)/CO(2) and ATP to give threonylcarbamoyl-AMP (TC-AMP) as the acyladenylate intermediate, with the release of diphosphate. The sequence is that of Threonylcarbamoyl-AMP synthase from Blochmanniella pennsylvanica (strain BPEN).